The primary structure comprises 194 residues: Dephospho-CoA kinase (194 aa).

The region spanning 3-194 (IVGLTGSIGM…RAIVDDLRAG (192 aa)) is the DPCK domain. Residue 11-16 (GMGKST) participates in ATP binding.

It belongs to the CoaE family.

It is found in the cytoplasm. The enzyme catalyses 3'-dephospho-CoA + ATP = ADP + CoA + H(+). It functions in the pathway cofactor biosynthesis; coenzyme A biosynthesis; CoA from (R)-pantothenate: step 5/5. Catalyzes the phosphorylation of the 3'-hydroxyl group of dephosphocoenzyme A to form coenzyme A. The chain is Dephospho-CoA kinase from Rhizobium meliloti (strain 1021) (Ensifer meliloti).